We begin with the raw amino-acid sequence, 156 residues long: 6,7-dimethyl-8-ribityllumazine synthase (156 aa).

5-amino-6-(D-ribitylamino)uracil is bound by residues Phe-23, 57–59, and 81–83; these read AYE and AVI. 86-87 provides a ligand contact to (2S)-2-hydroxy-3-oxobutyl phosphate; that stretch reads ST. The active-site Proton donor is His-89. Phe-114 contributes to the 5-amino-6-(D-ribitylamino)uracil binding site. Position 128 (Arg-128) interacts with (2S)-2-hydroxy-3-oxobutyl phosphate.

This sequence belongs to the DMRL synthase family.

It carries out the reaction (2S)-2-hydroxy-3-oxobutyl phosphate + 5-amino-6-(D-ribitylamino)uracil = 6,7-dimethyl-8-(1-D-ribityl)lumazine + phosphate + 2 H2O + H(+). Its pathway is cofactor biosynthesis; riboflavin biosynthesis; riboflavin from 2-hydroxy-3-oxobutyl phosphate and 5-amino-6-(D-ribitylamino)uracil: step 1/2. Its function is as follows. Catalyzes the formation of 6,7-dimethyl-8-ribityllumazine by condensation of 5-amino-6-(D-ribitylamino)uracil with 3,4-dihydroxy-2-butanone 4-phosphate. This is the penultimate step in the biosynthesis of riboflavin. The protein is 6,7-dimethyl-8-ribityllumazine synthase of Helicobacter hepaticus (strain ATCC 51449 / 3B1).